We begin with the raw amino-acid sequence, 1487 residues long: Golgin subfamily A member 3 (1487 aa).

M1 carries the N-acetylmethionine modification. Residues 1–118 form a disordered region; sequence MDGASAKQDG…GTSAEGSVRK (118 aa). Phosphoserine is present on residues S18 and S60. Over residues 62-74 the composition is skewed to polar residues; that stretch reads DRSSQVAICQNGQ. Residues 121–141 form an interaction with GOPC region; it reads LQSLRLSLPMQETQLCSTASS. The interval 172–257 is golgi-targeting domain; it reads ERSSQPATKM…DYRTEDPSDS (86 aa). 2 disordered regions span residues 221-321 and 365-394; these read PKVG…SSLS and AAQH…SMES. Composition is skewed to low complexity over residues 269-288, 312-321, and 365-375; these read SSLK…SPSS, SDSSSHSSLS, and AAQHQDQNQEA. S270 bears the Phosphoserine mark. The stretch at 358-1454 forms a coiled coil; it reads KDVLQAAAAQ…TITVHESLSS (1097 aa). Phosphoserine is present on residues S381, S385, and S461. Residues 785–796 are compositionally biased toward basic and acidic residues; sequence KEELDRGARRLE. The interval 785–804 is disordered; that stretch reads KEELDRGARRLEEDTEETSG. S979 bears the Phosphoserine mark. Residues 1372-1382 are compositionally biased toward basic and acidic residues; it reads RGAAKKKEPKG. Disordered stretches follow at residues 1372–1396 and 1458–1487; these read RGAA…IKIP and VEAA…GLGQ. S1387 carries the post-translational modification Phosphoserine. Over residues 1462–1474 the composition is skewed to basic and acidic residues; sequence PAEHAHPRGDTKL. A Phosphoserine modification is found at S1479.

As to quaternary structure, homodimer. Interacts with GOLGA7. Interacts with GOPC. In terms of processing, cleaved by caspases in apoptotic cells. Highly expressed in testis. Transcripts can be found in spermatids during spermatogenesis. No expression in Leydig cells, spermatogonia or spermatocytes. Detected at low levels in all tissues.

It localises to the cytoplasm. The protein localises to the golgi apparatus. The protein resides in the golgi stack membrane. Plays an important role in spermatogenesis and/or testis development. Probably identical with the serologically detectable male antigen (SDM). Probably involved in maintaining Golgi structure. In Mus musculus (Mouse), this protein is Golgin subfamily A member 3 (Golga3).